Reading from the N-terminus, the 406-residue chain is Cysteine desulfurase (406 aa).

Lys-226 carries the post-translational modification N6-(pyridoxal phosphate)lysine. Residue Cys-364 is the Cysteine persulfide intermediate of the active site.

Belongs to the class-V pyridoxal-phosphate-dependent aminotransferase family. Csd subfamily. In terms of assembly, homodimer. Interacts with SufE and the SufBCD complex composed of SufB, SufC and SufD. The interaction with SufE is required to mediate the direct transfer of the sulfur atom from the S-sulfanylcysteine. Pyridoxal 5'-phosphate serves as cofactor.

The protein resides in the cytoplasm. It carries out the reaction (sulfur carrier)-H + L-cysteine = (sulfur carrier)-SH + L-alanine. The enzyme catalyses L-selenocysteine + AH2 = hydrogenselenide + L-alanine + A + H(+). Its pathway is cofactor biosynthesis; iron-sulfur cluster biosynthesis. Cysteine desulfurases mobilize the sulfur from L-cysteine to yield L-alanine, an essential step in sulfur metabolism for biosynthesis of a variety of sulfur-containing biomolecules. Component of the suf operon, which is activated and required under specific conditions such as oxidative stress and iron limitation. Acts as a potent selenocysteine lyase in vitro, that mobilizes selenium from L-selenocysteine. Selenocysteine lyase activity is however unsure in vivo. This Salmonella dublin (strain CT_02021853) protein is Cysteine desulfurase.